Consider the following 494-residue polypeptide: 3-octaprenyl-4-hydroxybenzoate carboxy-lyase (494 aa).

Mn(2+) is bound at residue asparagine 172. Residues 175–177 (IYR), 189–191 (RWL), and 194–195 (RG) each bind prenylated FMN. Residue glutamate 238 coordinates Mn(2+). Aspartate 287 (proton donor) is an active-site residue.

This sequence belongs to the UbiD family. In terms of assembly, homohexamer. Requires prenylated FMN as cofactor. Mn(2+) serves as cofactor.

It localises to the cell membrane. The enzyme catalyses a 4-hydroxy-3-(all-trans-polyprenyl)benzoate + H(+) = a 2-(all-trans-polyprenyl)phenol + CO2. It functions in the pathway cofactor biosynthesis; ubiquinone biosynthesis. Catalyzes the decarboxylation of 3-octaprenyl-4-hydroxy benzoate to 2-octaprenylphenol, an intermediate step in ubiquinone biosynthesis. The polypeptide is 3-octaprenyl-4-hydroxybenzoate carboxy-lyase (Erwinia tasmaniensis (strain DSM 17950 / CFBP 7177 / CIP 109463 / NCPPB 4357 / Et1/99)).